The following is a 140-amino-acid chain: Organic hydroperoxide resistance protein-like (140 aa).

Belongs to the OsmC/Ohr family.

This Staphylococcus aureus (strain bovine RF122 / ET3-1) protein is Organic hydroperoxide resistance protein-like.